A 437-amino-acid chain; its full sequence is Eukaryotic peptide chain release factor subunit 1 (437 aa).

Position 2 is an N-acetylalanine (Ala-2). The NIKS motif; plays an important role in translational termination motif lies at 61 to 64 (NIKS). Lys-63 is modified (4-hydroxylysine). Lys-87 participates in a covalent cross-link: Glycyl lysine isopeptide (Lys-Gly) (interchain with G-Cter in SUMO2). An N5-methylglutamine modification is found at Gln-185. A Glycyl lysine isopeptide (Lys-Gly) (interchain with G-Cter in ubiquitin) cross-link involves residue Lys-279. Residue Thr-347 is modified to Phosphothreonine. Residue Lys-404 forms a Glycyl lysine isopeptide (Lys-Gly) (interchain with G-Cter in SUMO2) linkage.

The protein belongs to the eukaryotic release factor 1 family. Component of the eRF1-eRF3-GTP ternary complex, composed of ETF1/ERF1 and eRF3 (GSPT1/ERF3A or GSPT2/ERF3B) and GTP. Component of the transient SURF (SMG1-UPF1-eRF1-eRF3) complex. Interacts with JMJD4. The ETF1-GSPT1 complex interacts with JMJD4. Post-translationally, hydroxylation at Lys-63 by JMJD4 promotes its translational termination efficiency. In terms of processing, methylated at Gln-185 by N6AMT1. Ubiquitinated at Lys-279 via 'Lys-6'-linked polyubiquitin chains by RNF14 and RNF25 in response to ribosome collisions (ribosome stalling), leading to its degradation by the proteasome and rescue of stalled ribosomes.

It is found in the cytoplasm. Component of the eRF1-eRF3-GTP ternary complex, a ternary complex that mediates translation termination in response to the termination codons. The eRF1-eRF3-GTP complex binds to a stop codon in the ribosomal A-site. ETF1/ERF1 is responsible for stop codon recognition and inducing hydrolysis of peptidyl-tRNA. Following GTP hydrolysis, eRF3 (GSPT1/ERF3A or GSPT2/ERF3B) dissociates, permitting ETF1/eRF1 to accommodate fully in the A-site, followed by hydrolysis of peptidyl-tRNA. Component of the transient SURF complex which recruits UPF1 to stalled ribosomes in the context of nonsense-mediated decay (NMD) of mRNAs containing premature stop codons. Required for SHFL-mediated translation termination which inhibits programmed ribosomal frameshifting (-1PRF) of mRNA from viruses and cellular genes. The polypeptide is Eukaryotic peptide chain release factor subunit 1 (ETF1) (Bos taurus (Bovine)).